The sequence spans 320 residues: L-lactate dehydrogenase 1 (320 aa).

Residues Val-18, Asp-39, Arg-44, Tyr-69, and Gly-83 to Ala-84 contribute to the NAD(+) site. Positions 86 and 92 each coordinate substrate. NAD(+) contacts are provided by residues Ser-105, Ala-122 to Asn-124, and Ser-147. A substrate-binding site is contributed by Asn-124 to Asp-127. Substrate is bound at residue Asp-152–Arg-155. His-179 (proton acceptor) is an active-site residue. At Tyr-223 the chain carries Phosphotyrosine. Thr-232 is a substrate binding site.

This sequence belongs to the LDH/MDH superfamily. LDH family. In terms of assembly, homotetramer.

The protein resides in the cytoplasm. The enzyme catalyses (S)-lactate + NAD(+) = pyruvate + NADH + H(+). The protein operates within fermentation; pyruvate fermentation to lactate; (S)-lactate from pyruvate: step 1/1. In terms of biological role, catalyzes the conversion of lactate to pyruvate. The protein is L-lactate dehydrogenase 1 of Lactiplantibacillus plantarum (strain ATCC BAA-793 / NCIMB 8826 / WCFS1) (Lactobacillus plantarum).